Here is a 406-residue protein sequence, read N- to C-terminus: Homocysteine-responsive endoplasmic reticulum-resident ubiquitin-like domain member 2 protein (406 aa).

The Ubiquitin-like domain maps to 10–89; it reads VTLIIKAPNQ…HMVHLVCTSR (80 aa). Residues 86-156 are disordered; sequence CTSRTPPSSP…PQAQTDPAQS (71 aa). Low complexity-rich tracts occupy residues 87–98 and 109–139; these read TSRTPPSSPKSS and SNSN…SSSE. Residues 145–156 show a composition bias toward polar residues; it reads TLPQAQTDPAQS. The chain crosses the membrane as a helical span at residues 302–322; the sequence is FIMVMGAMLLVYLHQAGWFPF.

It localises to the membrane. In terms of biological role, could be involved in the unfolded protein response (UPR) pathway. This Bos taurus (Bovine) protein is Homocysteine-responsive endoplasmic reticulum-resident ubiquitin-like domain member 2 protein (HERPUD2).